Consider the following 261-residue polypeptide: tRNA U34 carboxymethyltransferase (261 aa).

Carboxy-S-adenosyl-L-methionine-binding positions include lysine 25, tryptophan 39, lysine 44, glycine 63, 114-115, tyrosine 135, and arginine 250; that span reads VE.

It belongs to the class I-like SAM-binding methyltransferase superfamily. CmoB family. As to quaternary structure, homotetramer.

The catalysed reaction is carboxy-S-adenosyl-L-methionine + 5-hydroxyuridine(34) in tRNA = 5-carboxymethoxyuridine(34) in tRNA + S-adenosyl-L-homocysteine + H(+). Its function is as follows. Catalyzes carboxymethyl transfer from carboxy-S-adenosyl-L-methionine (Cx-SAM) to 5-hydroxyuridine (ho5U) to form 5-carboxymethoxyuridine (cmo5U) at position 34 in tRNAs. The protein is tRNA U34 carboxymethyltransferase of Helicobacter pylori (strain Shi470).